Reading from the N-terminus, the 396-residue chain is S-adenosylmethionine decarboxylase proenzyme (396 aa).

Residues glutamate 29 and glutamate 32 contribute to the active site. Serine 88 (schiff-base intermediate with substrate; via pyruvic acid) is an active-site residue. The residue at position 88 (serine 88) is a Pyruvic acid (Ser); by autocatalysis. Catalysis depends on cysteine 102, which acts as the Proton donor; for catalytic activity. Residues serine 287 and histidine 301 each act as proton acceptor; for processing activity in the active site.

It belongs to the eukaryotic AdoMetDC family. Requires pyruvate as cofactor. Is synthesized initially as an inactive proenzyme. Formation of the active enzyme involves a self-maturation process in which the active site pyruvoyl group is generated from an internal serine residue via an autocatalytic post-translational modification. Two non-identical subunits are generated from the proenzyme in this reaction, and the pyruvate is formed at the N-terminus of the alpha chain, which is derived from the carboxyl end of the proenzyme. The post-translation cleavage follows an unusual pathway, termed non-hydrolytic serinolysis, in which the side chain hydroxyl group of the serine supplies its oxygen atom to form the C-terminus of the beta chain, while the remainder of the serine residue undergoes an oxidative deamination to produce ammonia and the pyruvoyl group blocking the N-terminus of the alpha chain.

It catalyses the reaction S-adenosyl-L-methionine + H(+) = S-adenosyl 3-(methylsulfanyl)propylamine + CO2. Its pathway is amine and polyamine biosynthesis; S-adenosylmethioninamine biosynthesis; S-adenosylmethioninamine from S-adenosyl-L-methionine: step 1/1. Functionally, catalyzes the decarboxylation of S-adenosylmethionine, a key step in the biosynthetic pathway for spermidine and spermine. It is essential for normal growth, sporulation, and maintenance of ds-RNA virus. The sequence is that of S-adenosylmethionine decarboxylase proenzyme (SPE2) from Saccharomyces cerevisiae (strain ATCC 204508 / S288c) (Baker's yeast).